The following is a 1710-amino-acid chain: MKISIFILLLFISSMVIISVNAETETIQTNTACDCDDDCDDGNRWSTDMCSAGLLFGKYCTHTQICCDDENACTIDSCSKTSGCVHTPINVDDKNPCTIDSCIKGFISHTQISCDDKNACTIDSCDCSSGCQNKPMSCDDNNPCTVDSCNNSTGCRNTPISVDDNNPCTIDSCSKSTGVVHIPINVDDLNPCTIDACTKEGGVTHTPVNVDDNNKCTTDSCSLFTGITHTEICCDDNNACTDDSCSPSTGCVNTPISCDDKNPCTVDSCNNSTGCCYTPINVDDNNPCTIDACTKSTGVTHTPINVDDNNQCTTDSCTKEGGVTHTPVNTDDNNPCTVDSCSPFTGVSHTPINVDDNNKCTIDACTKEGGVTHTPVNTDDNNACTLDSCSPLTGVTHTPINCDDKKACTVDSCSNSTGCVNTPISCDDNNPCTVDTCDDSTGCCNTPINVDDNNPCTVDACTKSTGVTHTPVNVDDNNKCTIDACTKEGGVTHTPVNTDDNNACTLDNCSPLTGVTHTPINCDDKKACTVDSCSNSTGCVNTPISCDDNNPCTVDSCDDITGCCNTPINVDDNNPCTVDACTKSTGVTHTPVNVDDNNKCTIDACTKEGGVTHTPVNTDDNNACTLDSCSPSTGVSHTPINCDDSNPCTVDSCSNSTGCVNTPVNVDDNNPCTVDACTKSTGVTHTPVNVDDNNKCTIDACTKEGGVTHTPVNTDDNNACTIDSCSPSTGISHTPINCDDKKACTVDSCSNSTGCVNTPISCDDNNPCTVDSCDDLTGCCNTPINVDDNNPCTIDACTKSTGVTHTPVNVDDNNKCTIDTCTKEGGVTHTPVNTDDNNACTLDSCSPSTGVSHTPINCDDNNKCTVDSCSNSTGCVNTPINCDDSNPCTVDSCNNSTGCVNTPVNVDDNNPCTVDACTKSTGVTHTPVNVDDNNKCTIDACTKEGGVTHTPVNTDDNNACTIDACTKEGGVTHTPVNTDDNNACTLDSCSPSTGVSHTPINCDDSNPCTVDSCSNSTGCCNTPINVDDNNPCTVDSCTKPTGVTHTPVNVDDNNKCTIDACTKEGGVTHTPVNTDDNNACTLDSCSPSTGISHAPINCDDSNPCTIDSCNNSTGCCNTPINVDDNNPCTVDSCTKSGGVTHTPVNVDDNNKCTTDACTKEGGVTHTPISCDDNNACTIDSCSNSTGCVNTPISCDDRNPCTVDTCTKEKGCQHSPIDTDDSNKCTIDACSSTTGVTHTSINCDDNNACTFDSCSNSTGCVSTPISCDDKNPCTLDSCDKKTGCCNTPINVDDNDKCTTDSCTKEGGVTHTPISCDDNNACTTDSCSKSTGCVNKPISCDDSNPCTVDSCSNSTGCCNTPINVDDNNPCTTDSCTKSGGVTHTPVNVDDNNKCTTDSCTKEGGITHTPISCDDNNPCTLDSCSPTTGCVNKPMNVDDNDACTTDTCNKDGTITHTPINTDDNNKCTLDACSPKTGVTHTPINCDDGNKCTINSCSPSVGCISTPVSCPKPKDKCSISQCDSAKGCIEVPMNCTSDKCNEASCCDGVCTSKPISCPKPKNKCQVAKCDLIKGCTVSNVVCDDGNACTEDSCCSDTGKCQFEPIKLPKNKNKCIISKCDPIKGTITNSTVNCECDDLCNIGECCEDTGKCNYRQKDCDDNNPKTADSCDSKTGKCINKPYNVITSGSNLISGLIGGLIGGGTGGKGDCKTCKN.

The N-terminal stretch at 1–22 (MKISIFILLLFISSMVIISVNA) is a signal peptide. Cys-rich CT repeat units follow at residues 43-70 (NRWSTDMCSAGLLFGKYCTHTQICCDDE), 71-94 (NACTIDSCSKTSGCVHTPINVDDK), 95-117 (NPCTIDSCIKGFISHTQISCDDK), 118-141 (NACTIDSCDCSSGCQNKPMSCDDN), 142-165 (NPCTVDSCNNSTGCRNTPISVDDN), 166-189 (NPCTIDSCSKSTGVVHIPINVDDL), 190-213 (NPCTIDACTKEGGVTHTPVNVDDN), 214-237 (NKCTTDSCSLFTGITHTEICCDDN), 238-261 (NACTDDSCSPSTGCVNTPISCDDK), 262-285 (NPCTVDSCNNSTGCCYTPINVDDN), 286-309 (NPCTIDACTKSTGVTHTPINVDDN), 310-333 (NQCTTDSCTKEGGVTHTPVNTDDN), 334-357 (NPCTVDSCSPFTGVSHTPINVDDN), 358-381 (NKCTIDACTKEGGVTHTPVNTDDN), 382-405 (NACTLDSCSPLTGVTHTPINCDDK), 406-429 (KACTVDSCSNSTGCVNTPISCDDN), 430-453 (NPCTVDTCDDSTGCCNTPINVDDN), 454-477 (NPCTVDACTKSTGVTHTPVNVDDN), 478-501 (NKCTIDACTKEGGVTHTPVNTDDN), 502-525 (NACTLDNCSPLTGVTHTPINCDDK), 526-549 (KACTVDSCSNSTGCVNTPISCDDN), 550-573 (NPCTVDSCDDITGCCNTPINVDDN), 574-597 (NPCTVDACTKSTGVTHTPVNVDDN), 598-621 (NKCTIDACTKEGGVTHTPVNTDDN), 622-645 (NACTLDSCSPSTGVSHTPINCDDS), 646-669 (NPCTVDSCSNSTGCVNTPVNVDDN), 670-693 (NPCTVDACTKSTGVTHTPVNVDDN), 694-717 (NKCTIDACTKEGGVTHTPVNTDDN), 718-741 (NACTIDSCSPSTGISHTPINCDDK), 742-765 (KACTVDSCSNSTGCVNTPISCDDN), 766-789 (NPCTVDSCDDLTGCCNTPINVDDN), 790-813 (NPCTIDACTKSTGVTHTPVNVDDN), 814-837 (NKCTIDTCTKEGGVTHTPVNTDDN), 838-861 (NACTLDSCSPSTGVSHTPINCDDN), 862-885 (NKCTVDSCSNSTGCVNTPINCDDS), 886-909 (NPCTVDSCNNSTGCVNTPVNVDDN), 910-933 (NPCTVDACTKSTGVTHTPVNVDDN), 934-957 (NKCTIDACTKEGGVTHTPVNTDDN), 958-981 (NACTIDACTKEGGVTHTPVNTDDN), 982-1005 (NACTLDSCSPSTGVSHTPINCDDS), 1006-1029 (NPCTVDSCSNSTGCCNTPINVDDN), 1030-1053 (NPCTVDSCTKPTGVTHTPVNVDDN), 1054-1077 (NKCTIDACTKEGGVTHTPVNTDDN), 1078-1101 (NACTLDSCSPSTGISHAPINCDDS), 1102-1125 (NPCTIDSCNNSTGCCNTPINVDDN), 1126-1149 (NPCTVDSCTKSGGVTHTPVNVDDN), 1150-1173 (NKCTTDACTKEGGVTHTPISCDDN), 1174-1197 (NACTIDSCSNSTGCVNTPISCDDR), 1198-1221 (NPCTVDTCTKEKGCQHSPIDTDDS), 1222-1245 (NKCTIDACSSTTGVTHTSINCDDN), 1246-1269 (NACTFDSCSNSTGCVSTPISCDDK), 1270-1293 (NPCTLDSCDKKTGCCNTPINVDDN), 1294-1317 (DKCTTDSCTKEGGVTHTPISCDDN), 1318-1341 (NACTTDSCSKSTGCVNKPISCDDS), 1342-1365 (NPCTVDSCSNSTGCCNTPINVDDN), 1366-1389 (NPCTTDSCTKSGGVTHTPVNVDDN), 1390-1413 (NKCTTDSCTKEGGITHTPISCDDN), 1414-1437 (NPCTLDSCSPTTGCVNKPMNVDDN), 1438-1461 (DACTTDTCNKDGTITHTPINTDDN), 1462-1485 (NKCTLDACSPKTGVTHTPINCDDG), 1486-1509 (NKCTINSCSPSVGCISTPVSCPKP), 1511-1534 (DKCSISQCDSAKGCIEVPMNCTSD), 1558-1581 (NKCQVAKCDLIKGCTVSNVVCDDG), 1582-1606 (NACTEDSCCSDTGKCQFEPIKLPKN), 1608-1632 (NKCIISKCDPIKGTITNSTVNCECD), and 1658-1682 (NPKTADSCDSKTGKCINKPYNVITS). Asparagine 150 and asparagine 151 each carry an N-linked (GlcNAc...) asparagine glycan. N-linked (GlcNAc...) asparagine glycosylation is found at asparagine 270 and asparagine 271. A glycan (N-linked (GlcNAc...) asparagine) is linked at asparagine 415. N-linked (GlcNAc...) asparagine glycosylation is present at asparagine 535. N-linked (GlcNAc...) asparagine glycosylation is present at asparagine 655. A glycan (N-linked (GlcNAc...) asparagine) is linked at asparagine 751. N-linked (GlcNAc...) asparagine glycosylation is found at asparagine 871, asparagine 894, and asparagine 895. An N-linked (GlcNAc...) asparagine glycan is attached at asparagine 1015. Residues asparagine 1110 and asparagine 1111 are each glycosylated (N-linked (GlcNAc...) asparagine). N-linked (GlcNAc...) asparagine glycosylation occurs at asparagine 1183. Asparagine 1255 carries an N-linked (GlcNAc...) asparagine glycan. Residue asparagine 1351 is glycosylated (N-linked (GlcNAc...) asparagine). N-linked (GlcNAc...) asparagine glycosylation is present at asparagine 1530. Asparagine 1624 carries an N-linked (GlcNAc...) asparagine glycan.

It localises to the secreted. The protein is Extracellular matrix protein A (ecmA) of Dictyostelium discoideum (Social amoeba).